Reading from the N-terminus, the 611-residue chain is Oligoendopeptidase F homolog (611 aa).

His-384 serves as a coordination point for Zn(2+). Glu-385 is an active-site residue. Residues His-388 and His-391 each coordinate Zn(2+).

This sequence belongs to the peptidase M3B family. It depends on Zn(2+) as a cofactor.

The chain is Oligoendopeptidase F homolog (pepF) from Mycoplasma pneumoniae (strain ATCC 29342 / M129 / Subtype 1) (Mycoplasmoides pneumoniae).